The following is a 211-amino-acid chain: Protein crossbronx-like (211 aa).

The 161-residue stretch at 17–177 (NQGYQILAEY…VRNSILWSCK (161 aa)) folds into the UBC core domain.

The protein belongs to the ubiquitin-conjugating enzyme family. FTS subfamily.

The protein is Protein crossbronx-like of Drosophila grimshawi (Hawaiian fruit fly).